Reading from the N-terminus, the 232-residue chain is uncharacterized protein (232 aa).

A disordered region spans residues 119 to 145 (DEEYRENSKAPEAKARPSFVGEGRRLG). Residues 123-133 (RENSKAPEAKA) show a composition bias toward basic and acidic residues.

This is an uncharacterized protein from Encephalitozoon cuniculi (strain GB-M1) (Microsporidian parasite).